The following is a 366-amino-acid chain: MIDRLMAREAIYQQSNPDPGGDPPEDGPPHGKNAADGGDEPDRGPDPDVTLRPQRMAEMVGQQDVIERLRIAIDAAQVRGEPLGHILFDGPPGLGKTTFATVIPSEMKTTVQMANGAGLKAPRDLLPYLTNVSRGSVLFIDEIHRVPRAIEEYLYTAMEDFRIDIVLGEGVNARTLNLSLEPFTLIGATTRAGMLTAPLRDRFQIREHLGWYTRKELAEIVLRNSKKLNIEVDPTSAGVIADRSRSTPRLANNRLLWVRDYAQSKTKGNVEASVCEAALDMIGIDHLGLDKQDRNYLDTLMRVFLGGPAGLDAIAHTMNVSSDTLEDEVEPFLLRSELLVRTRRGRLATPKAFEHMKRQMPDRPLS.

Residues 1–48 (MIDRLMAREAIYQQSNPDPGGDPPEDGPPHGKNAADGGDEPDRGPDPD) are disordered. The tract at residues 21 to 212 (GDPPEDGPPH…FQIREHLGWY (192 aa)) is large ATPase domain (RuvB-L). Residues Leu-51, Arg-52, Gly-93, Lys-96, Thr-97, Thr-98, 159 to 161 (EDF), Arg-202, Tyr-212, and Arg-249 contribute to the ATP site. Residue Thr-97 coordinates Mg(2+). Residues 213-283 (TRKELAEIVL…VCEAALDMIG (71 aa)) are small ATPAse domain (RuvB-S). Positions 286-366 (HLGLDKQDRN…KRQMPDRPLS (81 aa)) are head domain (RuvB-H). DNA is bound by residues Arg-341, Arg-343, and Arg-346.

Belongs to the RuvB family. In terms of assembly, homohexamer. Forms an RuvA(8)-RuvB(12)-Holliday junction (HJ) complex. HJ DNA is sandwiched between 2 RuvA tetramers; dsDNA enters through RuvA and exits via RuvB. An RuvB hexamer assembles on each DNA strand where it exits the tetramer. Each RuvB hexamer is contacted by two RuvA subunits (via domain III) on 2 adjacent RuvB subunits; this complex drives branch migration. In the full resolvosome a probable DNA-RuvA(4)-RuvB(12)-RuvC(2) complex forms which resolves the HJ.

Its subcellular location is the cytoplasm. It catalyses the reaction ATP + H2O = ADP + phosphate + H(+). In terms of biological role, the RuvA-RuvB-RuvC complex processes Holliday junction (HJ) DNA during genetic recombination and DNA repair, while the RuvA-RuvB complex plays an important role in the rescue of blocked DNA replication forks via replication fork reversal (RFR). RuvA specifically binds to HJ cruciform DNA, conferring on it an open structure. The RuvB hexamer acts as an ATP-dependent pump, pulling dsDNA into and through the RuvAB complex. RuvB forms 2 homohexamers on either side of HJ DNA bound by 1 or 2 RuvA tetramers; 4 subunits per hexamer contact DNA at a time. Coordinated motions by a converter formed by DNA-disengaged RuvB subunits stimulates ATP hydrolysis and nucleotide exchange. Immobilization of the converter enables RuvB to convert the ATP-contained energy into a lever motion, pulling 2 nucleotides of DNA out of the RuvA tetramer per ATP hydrolyzed, thus driving DNA branch migration. The RuvB motors rotate together with the DNA substrate, which together with the progressing nucleotide cycle form the mechanistic basis for DNA recombination by continuous HJ branch migration. Branch migration allows RuvC to scan DNA until it finds its consensus sequence, where it cleaves and resolves cruciform DNA. The protein is Holliday junction branch migration complex subunit RuvB of Rhodopirellula baltica (strain DSM 10527 / NCIMB 13988 / SH1).